Here is a 196-residue protein sequence, read N- to C-terminus: Auxin-induced protein 22B (196 aa).

An EAR-like (transcriptional repression) motif is present at residues 18 to 22 (LRLGL). The disordered stretch occupies residues 44–74 (RQVRETSQDSVSISKASHHQQHVETVSAPPP). Residues 99-186 (GIFVKVSMDG…SCKRLRIMKG (88 aa)) form the PB1 domain.

This sequence belongs to the Aux/IAA family. In terms of assembly, homodimers and heterodimers.

It localises to the nucleus. Its function is as follows. Aux/IAA proteins are short-lived transcriptional factors that function as repressors of early auxin response genes at low auxin concentrations. Repression is thought to result from the interaction with auxin response factors (ARFs), proteins that bind to the auxin-responsive promoter element (AuxRE). Formation of heterodimers with ARF proteins may alter their ability to modulate early auxin response genes expression. The sequence is that of Auxin-induced protein 22B (AUX22B) from Vigna radiata var. radiata (Mung bean).